A 196-amino-acid polypeptide reads, in one-letter code: Heat shock protein beta-8 (196 aa).

The tract at residues 1–34 (MADGQMPFPCHYTSRRRRDPFRDSPLSSRLLDDG) is disordered. Low complexity predominate over residues 23-34 (DSPLSSRLLDDG). A phosphoserine mark is found at Ser-24 and Ser-57. Thr-63 is modified (phosphothreonine). Asymmetric dimethylarginine occurs at positions 71 and 78. Residues 74–185 (TAMTRFGVPA…PFGESSFNNE (112 aa)) form the sHSP domain. Phosphoserine is present on Ser-87. A disordered region spans residues 176-196 (PFGESSFNNELPQDGQEVTCT). The span at 178–196 (GESSFNNELPQDGQEVTCT) shows a compositional bias: polar residues.

This sequence belongs to the small heat shock protein (HSP20) family. In terms of assembly, monomer. Forms a ternary complex with BAG3 and HSPA1A. Component of the chaperone-assisted selective autophagy (CASA) complex consisting of BAG3, HSPA8/HSC70, HSPB8 and STUB1/CHIP. Interacts with HSPB1. Interacts with DNAJB6. Interacts with BAG3. Phosphorylated.

The protein resides in the cytoplasm. The protein localises to the nucleus. Functionally, involved in the chaperone-assisted selective autophagy (CASA), a crucial process for protein quality control, particularly in mechanical strained cells and tissues such as muscle. Displays temperature-dependent chaperone activity. The sequence is that of Heat shock protein beta-8 (HSPB8) from Bos taurus (Bovine).